A 255-amino-acid polypeptide reads, in one-letter code: 5'-nucleotidase SurE (255 aa).

The a divalent metal cation site is built by Asp-8, Asp-9, Ser-40, and Asn-92.

It belongs to the SurE nucleotidase family. The cofactor is a divalent metal cation.

It localises to the cytoplasm. The catalysed reaction is a ribonucleoside 5'-phosphate + H2O = a ribonucleoside + phosphate. In terms of biological role, nucleotidase that shows phosphatase activity on nucleoside 5'-monophosphates. The protein is 5'-nucleotidase SurE of Brucella canis (strain ATCC 23365 / NCTC 10854 / RM-666).